Here is a 1234-residue protein sequence, read N- to C-terminus: Coiled-coil domain-containing protein CG32809 (1234 aa).

Over residues 1–11 the composition is skewed to basic and acidic residues; the sequence is MLIRWKSKDKS. 3 disordered regions span residues 1 to 88, 107 to 129, and 330 to 350; these read MLIR…HAHQ, KNKKNQPMRGYAPVNQGPLFDDD, and KVSMDGYTSSPERSSRGNYEE. Positions 12 to 25 are enriched in low complexity; it reads ASSNQSVGGSSSSS. A compositionally biased stretch (basic and acidic residues) spans 55 to 69; the sequence is GDERRRAMRRDDPRR. Positions 412–436 form a coiled coil; the sequence is HRIRVEHMERQLANLTGLVQKALVN. Residues 498–548 form a disordered region; that stretch reads DIQGIPKSHNPLHAAETKPTKPAIKSSTLPRTSSQERDRLKPPPPPKPIVL. Coiled-coil stretches lie at residues 565–594 and 630–666; these read EVYNHLRGLQKKAKDLRMEVRTLRRLSQAQ and TRISREEELYKQEVIRLEKDLSDLEGSVENLRGEVIN. Disordered regions lie at residues 754-793, 815-852, 928-1011, and 1028-1070; these read EQRLPPNEPTISEETPRSADISAPDKPIPTPRMGSFALSG, IAQQQQQQQQQQQQQQQQHQHQQLYEIRPEDSASDESA, LHSY…PPNQ, and SANA…ESGN. Composition is skewed to low complexity over residues 817–837, 952–965, 993–1004, 1028–1039, and 1046–1068; these read QQQQQQQQQQQQQQQQHQHQQ, TSSSTSLANGGSSS, TSSRSPLASPTS, SANANANANSNA, and VGETTSVVSGDTSSGDNSSGNES. The stretch at 1077 to 1105 forms a coiled coil; it reads VALEMRHQELLKKQKMLQEQYQRLQQMSK.

The chain is Coiled-coil domain-containing protein CG32809 from Drosophila melanogaster (Fruit fly).